A 557-amino-acid polypeptide reads, in one-letter code: High-affinity hexose transporter ght4 (557 aa).

Residues 1–9 (MGRTLTSVL) lie on the Cytoplasmic side of the membrane. The chain crosses the membrane as a helical span at residues 10 to 30 (VVFISMAGWLGGADTGSISGI). Residues 31 to 58 (LGMRDFQSRFADRYNPITNSYSYSAWRQ) are Extracellular-facing. A helical transmembrane segment spans residues 59 to 79 (ALLTGTVNAGCLFGAMLSSPF). Residues 80–87 (TEAIGKKY) are Cytoplasmic-facing. Residues 88–108 (SIAFFSGCYIIGQILLVTAVP) traverse the membrane as a helical segment. At 109-112 (SWVQ) the chain is on the extracellular side. Residues 113-133 (IMVGKLFTGLTIGALSVLSPG) traverse the membrane as a helical segment. Residues 134–144 (YQSEVAPPQIR) are Cytoplasmic-facing. Residues 145–165 (GAVVSTYQLFQTCGTLIAACI) traverse the membrane as a helical segment. Topologically, residues 166-179 (NMGTHKLRKTASWR) are extracellular. A helical membrane pass occupies residues 180–200 (TSFGINILWGIFLMVGVLFLP). Residues 201–266 (ESPRYLIYKG…VFGKEVRYRT (66 aa)) are Cytoplasmic-facing. A helical membrane pass occupies residues 267 to 285 (VLGFLTMLLRELIGNNYYF). The Extracellular portion of the chain corresponds to 286 to 301 (YYATQVFKGTGMTDIF). The chain crosses the membrane as a helical span at residues 302 to 322 (LPAVILGAINFGTTFGALYTI). At 323-328 (DNLGRR) the chain is on the cytoplasmic side. Residues 329 to 349 (NPLIFGAAFQSICFFIYAAVG) form a helical membrane-spanning segment. Over 350-363 (DRKLIYKNGTSDHR) the chain is Extracellular. Asparagine 357 is a glycosylation site (N-linked (GlcNAc...) asparagine). The helical transmembrane segment at 364–384 (AGAVMIVFSCLFLFSYCCSWG) threads the bilayer. Residues 385 to 404 (PMGWVIVGETFPIRYRSKCA) are Cytoplasmic-facing. The helical transmembrane segment at 405–425 (AVATSGNWLGNFMVSFFTPFI) threads the bilayer. Residues 426-432 (SNSIGFK) lie on the Extracellular side of the membrane. Residues 433–453 (LGYIYACINMTSAFQIFLMAK) traverse the membrane as a helical segment. Residues 454–557 (ETKGLTLEEV…VSEESHPTWV (104 aa)) lie on the Cytoplasmic side of the membrane. The segment covering 492 to 514 (KEEEKREREKSKGYRGQEERFIE) has biased composition (basic and acidic residues). The tract at residues 492 to 557 (KEEEKREREK…VSEESHPTWV (66 aa)) is disordered. A compositionally biased stretch (low complexity) spans 524-536 (SSASSESFASAGA). The span at 547-557 (NVSEESHPTWV) shows a compositional bias: basic and acidic residues.

Belongs to the major facilitator superfamily. Sugar transporter (TC 2.A.1.1) family.

It is found in the membrane. This chain is High-affinity hexose transporter ght4 (ght4), found in Schizosaccharomyces pombe (strain 972 / ATCC 24843) (Fission yeast).